Consider the following 319-residue polypeptide: Protein quaking-B (319 aa).

One can recognise a KH domain in the interval 87-153 (YVPVKEYPDF…WEHLNEDLHV (67 aa)). The SH3-binding signature appears at 276–279 (PQTP).

It belongs to the quaking family. In terms of assembly, homodimer; does not require RNA to homodimerize.

The protein localises to the cytoplasm. It is found in the nucleus. Functionally, RNA reader protein, which recognizes and binds specific RNAs, thereby regulating RNA metabolic processes, such as pre-mRNA splicing, circular RNA (circRNA) formation, mRNA export, mRNA stability and/or translation. Involved in various cellular processes, such as mRNA storage into stress granules, apoptosis, interferon response, glial cell fate and development. Binds to the 5'-NACUAAY-N(1,20)-UAAY-3' RNA core sequence. Acts as a mRNA modification reader that specifically recognizes and binds mRNA transcripts modified by internal N(7)-methylguanine (m7G). Promotes the formation of circular RNAs (circRNAs): acts by binding to sites flanking circRNA-forming exons. CircRNAs are produced by back-splicing circularization of pre-mRNAs. Required to protect and promote stability of mRNAs which promotes oligodendrocyte differentiation. Acts as an important regulator of muscle development: required during early skeletal myofibril formation by regulating the accumulation of the muscle-specific tropomyosin-3 (tpm3) transcripts. This chain is Protein quaking-B (qki2), found in Danio rerio (Zebrafish).